The following is a 102-amino-acid chain: PqqA binding protein (102 aa).

It belongs to the PqqD family. Monomer. Interacts with PqqE.

Its pathway is cofactor biosynthesis; pyrroloquinoline quinone biosynthesis. In terms of biological role, functions as a PqqA binding protein and presents PqqA to PqqE, in the pyrroloquinoline quinone (PQQ) biosynthetic pathway. This is PqqA binding protein from Rhodopseudomonas palustris (strain BisB5).